The primary structure comprises 218 residues: Capsid protein (218 aa).

The residue at position 1 (Met1) is an N-acetylmethionine; by host. Positions 1-29 (MDKSESTSAGRNHRRRPRRGSRSAPSSAD) are disordered. Residues 11–21 (RNHRRRPRRGS) are compositionally biased toward basic residues.

This sequence belongs to the cucumovirus capsid protein family.

It is found in the virion. Capsid protein. Probably binds RNA and plays a role in packaging. The chain is Capsid protein from Cucumber mosaic virus (strain C) (CMV).